The chain runs to 502 residues: Lysine--tRNA ligase (502 aa).

Residues glutamate 412 and glutamate 419 each contribute to the Mg(2+) site.

Belongs to the class-II aminoacyl-tRNA synthetase family. As to quaternary structure, homodimer. Mg(2+) serves as cofactor.

Its subcellular location is the cytoplasm. The catalysed reaction is tRNA(Lys) + L-lysine + ATP = L-lysyl-tRNA(Lys) + AMP + diphosphate. The protein is Lysine--tRNA ligase of Nitrosomonas europaea (strain ATCC 19718 / CIP 103999 / KCTC 2705 / NBRC 14298).